The primary structure comprises 140 residues: Organic hydroperoxide resistance protein-like 1 (140 aa).

The protein belongs to the OsmC/Ohr family.

The chain is Organic hydroperoxide resistance protein-like 1 from Staphylococcus epidermidis (strain ATCC 35984 / DSM 28319 / BCRC 17069 / CCUG 31568 / BM 3577 / RP62A).